The chain runs to 250 residues: 23S rRNA (guanosine-2'-O-)-methyltransferase RlmB (250 aa).

S-adenosyl-L-methionine is bound by residues G198, L218, and L227.

It belongs to the class IV-like SAM-binding methyltransferase superfamily. RNA methyltransferase TrmH family. RlmB subfamily.

The protein localises to the cytoplasm. It catalyses the reaction guanosine(2251) in 23S rRNA + S-adenosyl-L-methionine = 2'-O-methylguanosine(2251) in 23S rRNA + S-adenosyl-L-homocysteine + H(+). Its function is as follows. Specifically methylates the ribose of guanosine 2251 in 23S rRNA. The chain is 23S rRNA (guanosine-2'-O-)-methyltransferase RlmB from Pseudomonas syringae pv. tomato (strain ATCC BAA-871 / DC3000).